The primary structure comprises 368 residues: Galactoside 2-alpha-L-fucosyltransferase SEC1 (368 aa).

The tract at residues Met-1 to Gly-20 is disordered. Residues Met-1 to Arg-31 are Cytoplasmic-facing. A helical membrane pass occupies residues Phe-32–Ser-52. Residues Thr-53–Pro-368 lie on the Lumenal side of the membrane.

It belongs to the glycosyltransferase 11 family. As to expression, kidney.

Its subcellular location is the golgi apparatus. It localises to the golgi stack membrane. The enzyme catalyses a ganglioside GM1 + GDP-beta-L-fucose = a ganglioside Fuc-GM1 + GDP + H(+). Its pathway is protein modification; protein glycosylation. In terms of biological role, catalyzes the transfer of alpha 1,2-linked fucose to ganglioside GM1 and galacto-N-biose. This chain is Galactoside 2-alpha-L-fucosyltransferase SEC1, found in Bos taurus (Bovine).